A 438-amino-acid chain; its full sequence is Polycomb protein eed-A (438 aa).

A disordered region spans residues 1 to 67 (MSEASGRAAG…NAPGRKAWGK (67 aa)). Residues 40–57 (SIESGTNTERPDTPTNAA) show a composition bias toward polar residues. WD repeat units follow at residues 88–131 (DHNQ…DIRL), 139–182 (DADE…CIKH), 185–225 (GHGN…LVAI), 231–270 (GHRD…MKTA), 301–338 (IHRN…DDID), 356–396 (SQCD…PHKA), and 405–438 (KCAS…DRLR).

It belongs to the WD repeat ESC family. As to quaternary structure, component of the prc2/eed-ezh2 complex. Interacts with yy1. Can interact with ezh2, hdac1 and taf9.

Its subcellular location is the nucleus. Functionally, polycomb group (PcG) protein. Component of the prc2/eed-ezh2 complex, which methylates 'Lys-9' and 'Lys-27' of histone H3, leading to transcriptional repression of the affected target gene. The sequence is that of Polycomb protein eed-A (eed-a) from Xenopus laevis (African clawed frog).